The sequence spans 199 residues: Ribosome maturation factor RimM (199 aa).

The PRC barrel domain maps to 95-168 (EDEFYHADLV…FVRVDPVAAG (74 aa)). The tract at residues 167-199 (AGLVEDEDGDAPREEDFDPKGRPRGPRDAGGNR) is disordered. Residues 176 to 193 (DAPREEDFDPKGRPRGPR) show a composition bias toward basic and acidic residues.

It belongs to the RimM family. As to quaternary structure, binds ribosomal protein uS19.

It localises to the cytoplasm. Functionally, an accessory protein needed during the final step in the assembly of 30S ribosomal subunit, possibly for assembly of the head region. Essential for efficient processing of 16S rRNA. May be needed both before and after RbfA during the maturation of 16S rRNA. It has affinity for free ribosomal 30S subunits but not for 70S ribosomes. This Mesorhizobium japonicum (strain LMG 29417 / CECT 9101 / MAFF 303099) (Mesorhizobium loti (strain MAFF 303099)) protein is Ribosome maturation factor RimM.